The primary structure comprises 239 residues: Purine nucleoside phosphorylase DeoD-type 1 (239 aa).

A purine D-ribonucleoside is bound at residue H5. Residues G21, R25, R44, and 88–91 (RVGS) contribute to the phosphate site. A purine D-ribonucleoside is bound by residues 180–182 (EME) and 204–205 (SD). The active-site Proton donor is the D205.

Belongs to the PNP/UDP phosphorylase family. As to quaternary structure, homohexamer; trimer of homodimers.

It carries out the reaction a purine D-ribonucleoside + phosphate = a purine nucleobase + alpha-D-ribose 1-phosphate. The catalysed reaction is a purine 2'-deoxy-D-ribonucleoside + phosphate = a purine nucleobase + 2-deoxy-alpha-D-ribose 1-phosphate. Its function is as follows. Catalyzes the reversible phosphorolytic breakdown of the N-glycosidic bond in the beta-(deoxy)ribonucleoside molecules, with the formation of the corresponding free purine bases and pentose-1-phosphate. The polypeptide is Purine nucleoside phosphorylase DeoD-type 1 (Vibrio vulnificus (strain CMCP6)).